The following is a 725-amino-acid chain: Prolyl 3-hydroxylase 1 (725 aa).

The N-terminal stretch at methionine 1–alanine 14 is a signal peptide. One copy of the TPR 1 repeat lies at proline 36–isoleucine 69. A glycan (N-linked (GlcNAc...) asparagine) is linked at asparagine 82. TPR repeat units follow at residues arginine 136–histidine 169, histidine 198–alanine 231, and proline 294–aspartate 327. Residues lysine 394–glutamate 441 are a coiled coil. N-linked (GlcNAc...) asparagine glycans are attached at residues asparagine 460 and asparagine 533. Residues serine 557–leucine 671 form the Fe2OG dioxygenase domain. 3 residues coordinate Fe cation: histidine 580, aspartate 582, and histidine 652. Arginine 662 is an active-site residue. Residues glutamate 701–alanine 715 are compositionally biased toward polar residues. Residues glutamate 701 to leucine 725 form a disordered region. The Prevents secretion from ER motif lies at lysine 722–leucine 725.

Belongs to the leprecan family. Binds unfolded collagen in a complex with CYPB and CRTAP. It depends on Fe cation as a cofactor. The cofactor is L-ascorbate. In terms of tissue distribution, expressed in embryonic dermis, tendon, cartilage, liver and kidney. Expression in the kidney is restricted to the calyx. In the liver, expression is restricted to the interlobular septum.

The protein resides in the endoplasmic reticulum. The catalysed reaction is L-prolyl-[collagen] + 2-oxoglutarate + O2 = trans-3-hydroxy-L-prolyl-[collagen] + succinate + CO2. Its function is as follows. Has prolyl 3-hydroxylase activity catalyzing the post-translational formation of 3-hydroxyproline in -Xaa-Pro-Gly-sequences in collagens, especially types IV and V. May be involved in the secretoty pathway of cells. Has growth suppressive activity in fibroblasts. The sequence is that of Prolyl 3-hydroxylase 1 from Gallus gallus (Chicken).